The sequence spans 87 residues: Large ribosomal subunit protein bL27 (87 aa).

Positions 1-24 (MATKKAGGSSRNGRDSAGRRLGVK) are disordered.

The protein belongs to the bacterial ribosomal protein bL27 family.

In Rickettsia massiliae (strain Mtu5), this protein is Large ribosomal subunit protein bL27.